A 150-amino-acid chain; its full sequence is D-aminoacyl-tRNA deacylase (150 aa).

A Gly-cisPro motif, important for rejection of L-amino acids motif is present at residues 138 to 139 (GP).

Belongs to the DTD family. In terms of assembly, homodimer.

The protein localises to the cytoplasm. It carries out the reaction glycyl-tRNA(Ala) + H2O = tRNA(Ala) + glycine + H(+). The catalysed reaction is a D-aminoacyl-tRNA + H2O = a tRNA + a D-alpha-amino acid + H(+). Functionally, an aminoacyl-tRNA editing enzyme that deacylates mischarged D-aminoacyl-tRNAs. Also deacylates mischarged glycyl-tRNA(Ala), protecting cells against glycine mischarging by AlaRS. Acts via tRNA-based rather than protein-based catalysis; rejects L-amino acids rather than detecting D-amino acids in the active site. By recycling D-aminoacyl-tRNA to D-amino acids and free tRNA molecules, this enzyme counteracts the toxicity associated with the formation of D-aminoacyl-tRNA entities in vivo and helps enforce protein L-homochirality. The polypeptide is D-aminoacyl-tRNA deacylase (Dechloromonas aromatica (strain RCB)).